We begin with the raw amino-acid sequence, 155 residues long: uncharacterized protein (155 aa).

The first 21 residues, 1–21, serve as a signal peptide directing secretion; sequence MFFIVAAGFVIAALIAAIGMA. The tract at residues 35–155 is disordered; that stretch reads GQTKPATTRP…PVYRPPEEMV (121 aa). A compositionally biased stretch (polar residues) spans 118 to 128; sequence ATASNTPQNEA.

This is an uncharacterized protein from Schizosaccharomyces pombe (strain 972 / ATCC 24843) (Fission yeast).